The following is a 187-amino-acid chain: Probable chorismate pyruvate-lyase (187 aa).

R76, L114, and E173 together coordinate substrate.

The protein belongs to the UbiC family.

It is found in the cytoplasm. The catalysed reaction is chorismate = 4-hydroxybenzoate + pyruvate. It functions in the pathway cofactor biosynthesis; ubiquinone biosynthesis. Functionally, removes the pyruvyl group from chorismate, with concomitant aromatization of the ring, to provide 4-hydroxybenzoate (4HB) for the ubiquinone pathway. The sequence is that of Probable chorismate pyruvate-lyase from Shewanella amazonensis (strain ATCC BAA-1098 / SB2B).